Reading from the N-terminus, the 394-residue chain is NAD(P)H-quinone oxidoreductase subunit H (394 aa).

The protein belongs to the complex I 49 kDa subunit family. As to quaternary structure, NDH-1 can be composed of about 15 different subunits; different subcomplexes with different compositions have been identified which probably have different functions.

It is found in the cellular thylakoid membrane. It carries out the reaction a plastoquinone + NADH + (n+1) H(+)(in) = a plastoquinol + NAD(+) + n H(+)(out). It catalyses the reaction a plastoquinone + NADPH + (n+1) H(+)(in) = a plastoquinol + NADP(+) + n H(+)(out). NDH-1 shuttles electrons from an unknown electron donor, via FMN and iron-sulfur (Fe-S) centers, to quinones in the respiratory and/or the photosynthetic chain. The immediate electron acceptor for the enzyme in this species is believed to be plastoquinone. Couples the redox reaction to proton translocation, and thus conserves the redox energy in a proton gradient. Cyanobacterial NDH-1 also plays a role in inorganic carbon-concentration. This Synechococcus sp. (strain WH7803) protein is NAD(P)H-quinone oxidoreductase subunit H.